The sequence spans 441 residues: Inner kinetochore subunit mis17 (441 aa).

Residues 160 to 173 (SSILENSPPNKVQR) are compositionally biased toward polar residues. Residues 160 to 240 (SSILENSPPN…TSSMAPRNLL (81 aa)) form a disordered region. Residues 174–183 (LSSLDSSQDS) are compositionally biased toward low complexity. Residues 192–201 (VTGTTFSSQA) are compositionally biased toward polar residues. Residues 217–233 (SLTNQSSSLQSSLQTSS) show a composition bias toward low complexity.

It belongs to the CENP-U/AME1 family. Component of the heterotetrameric kinetochore subcomplex COMA, which consists of fta2, fta7, mal2 and mis17. The COMA subcomplex is part of a larger constitutive centromere-associated network (CCAN) (also known as central kinetochore Sim4 complex in fission yeast), which is composed of at least cnl2, cnp3, cnp20, fta1, fta2, fta3, fta4, fta6, fta7, mal2, mhf1, mhf2, mis6, mis15, mis17, sim4 and wip1. Interacts with mis6 and mis15.

It localises to the nucleus. Its subcellular location is the chromosome. The protein resides in the centromere. It is found in the kinetochore. In terms of biological role, component of the kinetochore, a multiprotein complex that assembles on centromeric DNA and attaches chromosomes to spindle microtubules, mediating chromosome segregation and sister chromatid segregation during meiosis and mitosis. Component of the inner kinetochore COMA complex, which connects centromere-associated proteins and the outer kinetochore. COMA interacts with other inner kinetochore proteins to form the inner kinetochore constitutive centromere-associated network (CCAN), which serves as a structural platform for outer kinetochore assembly. In Schizosaccharomyces pombe (strain 972 / ATCC 24843) (Fission yeast), this protein is Inner kinetochore subunit mis17 (mis17).